The sequence spans 169 residues: Lutropin/choriogonadotropin subunit beta (169 aa).

An N-terminal signal peptide occupies residues 1 to 20 (MEMLQGLLLWMLLSVGGVWA). Intrachain disulfides connect Cys-29–Cys-77, Cys-43–Cys-92, Cys-46–Cys-130, Cys-54–Cys-108, Cys-58–Cys-110, and Cys-113–Cys-120. A glycan (N-linked (GlcNAc...) asparagine) is linked at Asn-33. The segment at 131 to 169 (APQASSSSKDPPSQPLTSTSTPTPGASNRSSHPLPIKTS) is disordered. The span at 145–154 (PLTSTSTPTP) shows a compositional bias: low complexity. The span at 155-169 (GASNRSSHPLPIKTS) shows a compositional bias: polar residues. A glycan (N-linked (GlcNAc...) asparagine) is linked at Asn-158.

The protein belongs to the glycoprotein hormones subunit beta family. Heterodimer of a common alpha chain and a unique beta chain which confers biological specificity to thyrotropin, lutropin, follitropin and gonadotropin.

It localises to the secreted. Promotes spermatogenesis and ovulation by stimulating the testes and ovaries to synthesize steroids. The polypeptide is Lutropin/choriogonadotropin subunit beta (LHB) (Equus quagga burchellii (Burchell's zebra)).